A 343-amino-acid chain; its full sequence is Polyprenal reductase 2 (343 aa).

The next 6 membrane-spanning stretches (helical) occupy residues 12-32, 66-86, 164-184, 223-243, 266-286, and 291-311; these read GAWITVWIVSILPLVIASIPT, FAHFYVIGVVWTTLLLAATWM, MHILGYFAGLFFYVTAPLSLC, PLMKLGSLQWIGGAIFLWGWI, IIPYGDWFGMVSSPHFLAEIV, and LLIASGGTDITIWLLFGFVAA.

It belongs to the steroid 5-alpha reductase family. Polyprenal reductase subfamily. Expressed in roots, leaves, stems and flowers.

Its subcellular location is the endoplasmic reticulum membrane. It catalyses the reaction a di-trans,poly-cis-dolichal + NADP(+) = a di-trans,poly-cis-polyprenal + NADPH + H(+). It participates in protein modification; protein glycosylation. In terms of biological role, plays a key role in early steps of protein N-linked glycosylation by being involved in the conversion of polyprenol into dolichol. Acts as a polyprenal reductase that mediates the reduction of polyprenal into dolichal in a NADP-dependent mechanism. Dolichols are required for the synthesis of dolichol-linked monosaccharides and the oligosaccharide precursor used for N-glycosylation. Involved in the regulation of plant growth and reproductive processes. In Arabidopsis thaliana (Mouse-ear cress), this protein is Polyprenal reductase 2.